A 235-amino-acid chain; its full sequence is Uridylate kinase (235 aa).

8–11 contributes to the ATP binding site; that stretch reads KFSG. The segment at 16 to 21 is involved in allosteric activation by GTP; it reads GAEGYG. UMP is bound at residue Gly50. The ATP site is built by Gly51 and Arg55. UMP-binding positions include Asp71 and 132–139; that span reads TGNPYFTT. Thr159, Tyr165, and Asp168 together coordinate ATP.

The protein belongs to the UMP kinase family. As to quaternary structure, homohexamer.

The protein localises to the cytoplasm. The catalysed reaction is UMP + ATP = UDP + ADP. It functions in the pathway pyrimidine metabolism; CTP biosynthesis via de novo pathway; UDP from UMP (UMPK route): step 1/1. Allosterically activated by GTP. Inhibited by UTP. Catalyzes the reversible phosphorylation of UMP to UDP. The protein is Uridylate kinase of Aliarcobacter butzleri (strain RM4018) (Arcobacter butzleri).